The chain runs to 398 residues: Argininosuccinate synthase (398 aa).

8–16 (AYSGGLDTS) contributes to the ATP binding site. Tyr87 provides a ligand contact to L-citrulline. Gly117 is a binding site for ATP. 3 residues coordinate L-aspartate: Thr119, Asn123, and Asp124. An L-citrulline-binding site is contributed by Asn123. L-citrulline-binding residues include Arg127, Ser175, Glu260, and Tyr272.

It belongs to the argininosuccinate synthase family. Type 1 subfamily. In terms of assembly, homotetramer.

Its subcellular location is the cytoplasm. The enzyme catalyses L-citrulline + L-aspartate + ATP = 2-(N(omega)-L-arginino)succinate + AMP + diphosphate + H(+). The protein operates within amino-acid biosynthesis; L-arginine biosynthesis; L-arginine from L-ornithine and carbamoyl phosphate: step 2/3. This chain is Argininosuccinate synthase, found in Mycobacterium tuberculosis (strain ATCC 25618 / H37Rv).